Here is a 505-residue protein sequence, read N- to C-terminus: Ion-translocating oxidoreductase complex subunit C (505 aa).

4Fe-4S ferredoxin-type domains are found at residues 381–410 and 420–449; these read ELNNFEEKNCIRCAACSYSCPMNLLPEQLY and KTQIYNIQDCIECGICEQVCPSDIPLMSYY. Residues Cys-390, Cys-393, Cys-396, Cys-400, Cys-429, Cys-432, Cys-435, and Cys-439 each coordinate [4Fe-4S] cluster.

Belongs to the 4Fe4S bacterial-type ferredoxin family. RnfC subfamily. In terms of assembly, the complex is composed of six subunits: RnfA, RnfB, RnfC, RnfD, RnfE and RnfG. The cofactor is [4Fe-4S] cluster.

Its subcellular location is the cell inner membrane. Functionally, part of a membrane-bound complex that couples electron transfer with translocation of ions across the membrane. The sequence is that of Ion-translocating oxidoreductase complex subunit C from Buchnera aphidicola subsp. Baizongia pistaciae (strain Bp).